A 513-amino-acid chain; its full sequence is MVWEVKTNQRPHAVQRLLLVMDERATGVSDSLELLQCNENVPSSPGYNSCDEHMELDDLPELQAVQSDPTQSAIYQLSSDVSHQEYPRPSWSQNTSDIPENTHREDEVDWLTELANIATSPQSPLMQCSFYNRSSPVHIIATSKSLHSYARPPPVSSAKSGPAFPHDHWKEETPVRHERANSESESGIFCMSSLSDDDDLGWCNSWPSTVWHCFLKGTRLCFHKESKKEWQDVEDFARAASCDEEEIQMGTHKGYGSDGLKLLSHEESVSFGESVLKLTFDPGTVEDGLLTVECKLDHPFYVKNKGWSSFYPSLTVVQHGIPCCEIHIGDVCLPPGHPDAINFDDSGVFDTFKSYDFTPMDSSAVYVLSSMARQRRASLSCGGPGTGQEFAGSEFSKSCGSPGSSQLSSSSLYTKAVKSHSSGTVSATSPNKCKRPMNAFMLFAKKYRVEYTQMYPGKDNRAISVILGDRWKKMKNEERRMYTLEAKALAEEQKRLNPDCWKRKRTNSGSQQH.

The disordered stretch occupies residues 151 to 181 (RPPPVSSAKSGPAFPHDHWKEETPVRHERAN). Residues 165 to 181 (PHDHWKEETPVRHERAN) are compositionally biased toward basic and acidic residues. Positions 202-343 (WCNSWPSTVW…PPGHPDAINF (142 aa)) constitute an AXH domain. Residues 433-501 (CKRPMNAFML…EQKRLNPDCW (69 aa)) constitute a DNA-binding region (HMG box).

Binds TCF4. Binds RB1. Binds the second PAH repeat of SIN3A. In terms of processing, ubiquitinated by the CTLH E3 ubiquitin-protein ligase complex, leading to subsequent proteasomal degradation. Highly expressed in liver, adipose tissue, lung, brain, spleen, kidney, skeletal muscle and heart.

The protein resides in the nucleus. In terms of biological role, transcriptional repressor that binds to the promoter region of target genes. Plays a role in the regulation of the cell cycle and of the Wnt pathway. Binds preferentially to the sequence 5'-TTCATTCATTCA-3'. Binding to the histone H1.0 promoter is enhanced by interaction with RB1. Disrupts the interaction between DNA and TCF4. The chain is HMG box-containing protein 1 (Hbp1) from Rattus norvegicus (Rat).